The sequence spans 481 residues: Sulfate adenylyltransferase subunit 1 (481 aa).

The 215-residue stretch at 22–236 (KDLLRFITCG…LLDSIRLDAD (215 aa)) folds into the tr-type G domain. The G1 stretch occupies residues 31-38 (GSVDDGKS). Residue 31-38 (GSVDDGKS) participates in GTP binding. Residues 89 to 93 (GITID) form a G2 region. The interval 110–113 (DCPG) is G3. GTP contacts are provided by residues 110–114 (DCPGH) and 165–168 (NKMD). The segment at 165-168 (NKMD) is G4. A G5 region spans residues 202–204 (SAL).

Belongs to the TRAFAC class translation factor GTPase superfamily. Classic translation factor GTPase family. CysN/NodQ subfamily. As to quaternary structure, heterodimer composed of CysD, the smaller subunit, and CysN.

It catalyses the reaction sulfate + ATP + H(+) = adenosine 5'-phosphosulfate + diphosphate. It functions in the pathway sulfur metabolism; hydrogen sulfide biosynthesis; sulfite from sulfate: step 1/3. Functionally, with CysD forms the ATP sulfurylase (ATPS) that catalyzes the adenylation of sulfate producing adenosine 5'-phosphosulfate (APS) and diphosphate, the first enzymatic step in sulfur assimilation pathway. APS synthesis involves the formation of a high-energy phosphoric-sulfuric acid anhydride bond driven by GTP hydrolysis by CysN coupled to ATP hydrolysis by CysD. The polypeptide is Sulfate adenylyltransferase subunit 1 (Laribacter hongkongensis (strain HLHK9)).